Here is a 231-residue protein sequence, read N- to C-terminus: Killer cell lectin-like receptor subfamily F member 1 (231 aa).

Residues 1–38 (MQDEERYMTLNVQSKKRTSTQTTQLTFKDYSVVLHWYK) lie on the Cytoplasmic side of the membrane. Tyr7 carries the post-translational modification Phosphotyrosine. A helical; Signal-anchor for type II membrane protein transmembrane segment spans residues 39 to 59 (ILLGISGTLNGILALALISLI). Residues 60 to 231 (LLVSQGVLLK…SSVFKWICQY (172 aa)) lie on the Extracellular side of the membrane. N-linked (GlcNAc...) asparagine glycosylation is found at Asn77, Asn91, Asn96, and Asn176. The C-type lectin domain occupies 121–230 (YRGKCYWFSN…CSSVFKWICQ (110 aa)). Cystine bridges form between Cys142–Cys229 and Cys208–Cys221.

As to quaternary structure, homodimer. Interacts with CLEC2B. Post-translationally, phosphorylated on Tyr-7; this phosphorylation is required for NKp80/KLRF1-mediated cytotoxicity.

The protein localises to the membrane. Functions as an activating receptor involved in immunosurveillance upon binding to various ligands displayed at the surface of myeloid cells. Upon interaction with CLEC2B ligand, stimulates NK-cell cytotoxicity and cytokine production leading to the cytolysis of malignant CLEC2B-expressing myeloid cells. Actviation of the common cytotoxicity pathway involves SRC and SYK kinases. The chain is Killer cell lectin-like receptor subfamily F member 1 (KLRF1) from Macaca fascicularis (Crab-eating macaque).